The following is a 278-amino-acid chain: Pyrroline-5-carboxylate reductase (278 aa).

Belongs to the pyrroline-5-carboxylate reductase family.

It is found in the cytoplasm. It catalyses the reaction L-proline + NADP(+) = (S)-1-pyrroline-5-carboxylate + NADPH + 2 H(+). The catalysed reaction is L-proline + NAD(+) = (S)-1-pyrroline-5-carboxylate + NADH + 2 H(+). It functions in the pathway amino-acid biosynthesis; L-proline biosynthesis; L-proline from L-glutamate 5-semialdehyde: step 1/1. In Actinidia chinensis var. chinensis (Chinese soft-hair kiwi), this protein is Pyrroline-5-carboxylate reductase.